Consider the following 184-residue polypeptide: MSRVGNKAIEVPNAVKVDIKDRNFISVEGPKGKLEYQFNHRLTITNENKVITVKRPNDEIFMKKIHGTTRALLSNMVEGVSKGFQKTLKIVGLAYRAQIKDKQLILSLGFSHPVSVAIPDNLEVVVNQNTEIVIKGIDKQLVGEFAAKNVKLRKPEPYKGKGIRYVGQYVRQKAGKSAKKTRKD.

Belongs to the universal ribosomal protein uL6 family. In terms of assembly, part of the 50S ribosomal subunit.

This protein binds to the 23S rRNA, and is important in its secondary structure. It is located near the subunit interface in the base of the L7/L12 stalk, and near the tRNA binding site of the peptidyltransferase center. This Onion yellows phytoplasma (strain OY-M) protein is Large ribosomal subunit protein uL6.